A 353-amino-acid chain; its full sequence is Methylthioribose-1-phosphate isomerase (353 aa).

Substrate contacts are provided by residues 51-53 (RGA), arginine 94, and glutamine 199. Residue aspartate 240 is the Proton donor of the active site. Substrate is bound at residue 250-251 (NK).

It belongs to the EIF-2B alpha/beta/delta subunits family. MtnA subfamily. In terms of assembly, homodimer.

The enzyme catalyses 5-(methylsulfanyl)-alpha-D-ribose 1-phosphate = 5-(methylsulfanyl)-D-ribulose 1-phosphate. It participates in amino-acid biosynthesis; L-methionine biosynthesis via salvage pathway; L-methionine from S-methyl-5-thio-alpha-D-ribose 1-phosphate: step 1/6. Catalyzes the interconversion of methylthioribose-1-phosphate (MTR-1-P) into methylthioribulose-1-phosphate (MTRu-1-P). The chain is Methylthioribose-1-phosphate isomerase from Bacillus cereus (strain ATCC 14579 / DSM 31 / CCUG 7414 / JCM 2152 / NBRC 15305 / NCIMB 9373 / NCTC 2599 / NRRL B-3711).